A 165-amino-acid chain; its full sequence is Putative glycine-rich cell wall structural protein 1 (165 aa).

The signal sequence occupies residues 1-23; that stretch reads MARKVIALAFLLLLTISLSKSNA. R2; Tyr-rich repeat units lie at residues 56-62 and 93-99; these read GYGYGYG. Residues 105-125 are disordered; sequence AQGQGSGGGGGGGGGGGGGGS. The R2; Tyr-rich repeat unit spans residues 132–138; that stretch reads GYGYGYG. Residues 146 to 165 form a disordered region; that stretch reads GGGGGGGGGGGGSGYVGKHE.

It is found in the secreted. Its subcellular location is the cell wall. Functionally, responsible for plasticity of the cell wall. The polypeptide is Putative glycine-rich cell wall structural protein 1 (GRP-1) (Oryza sativa subsp. indica (Rice)).